Reading from the N-terminus, the 279-residue chain is Tryptophan synthase alpha chain (279 aa).

Catalysis depends on proton acceptor residues Glu63 and Asp74.

Belongs to the TrpA family. Tetramer of two alpha and two beta chains.

It catalyses the reaction (1S,2R)-1-C-(indol-3-yl)glycerol 3-phosphate + L-serine = D-glyceraldehyde 3-phosphate + L-tryptophan + H2O. The protein operates within amino-acid biosynthesis; L-tryptophan biosynthesis; L-tryptophan from chorismate: step 5/5. In terms of biological role, the alpha subunit is responsible for the aldol cleavage of indoleglycerol phosphate to indole and glyceraldehyde 3-phosphate. This chain is Tryptophan synthase alpha chain, found in Prochlorococcus marinus subsp. pastoris (strain CCMP1986 / NIES-2087 / MED4).